The following is a 115-amino-acid chain: Cytochrome c oxidase subunit 3 (115 aa).

2 consecutive transmembrane segments (helical) span residues 32-52 (CLQGLLFTVLLGLYFSFLQGL) and 70-90 (FFLATGFHGLHVLIGTIFLMI).

This sequence belongs to the cytochrome c oxidase subunit 3 family. Component of the cytochrome c oxidase (complex IV, CIV), a multisubunit enzyme composed of a catalytic core of 3 subunits and several supernumerary subunits. The complex exists as a monomer or a dimer and forms supercomplexes (SCs) in the inner mitochondrial membrane with ubiquinol-cytochrome c oxidoreductase (cytochrome b-c1 complex, complex III, CIII).

It localises to the mitochondrion inner membrane. It carries out the reaction 4 Fe(II)-[cytochrome c] + O2 + 8 H(+)(in) = 4 Fe(III)-[cytochrome c] + 2 H2O + 4 H(+)(out). Component of the cytochrome c oxidase, the last enzyme in the mitochondrial electron transport chain which drives oxidative phosphorylation. The respiratory chain contains 3 multisubunit complexes succinate dehydrogenase (complex II, CII), ubiquinol-cytochrome c oxidoreductase (cytochrome b-c1 complex, complex III, CIII) and cytochrome c oxidase (complex IV, CIV), that cooperate to transfer electrons derived from NADH and succinate to molecular oxygen, creating an electrochemical gradient over the inner membrane that drives transmembrane transport and the ATP synthase. Cytochrome c oxidase is the component of the respiratory chain that catalyzes the reduction of oxygen to water. Electrons originating from reduced cytochrome c in the intermembrane space (IMS) are transferred via the dinuclear copper A center (CU(A)) of subunit 2 and heme A of subunit 1 to the active site in subunit 1, a binuclear center (BNC) formed by heme A3 and copper B (CU(B)). The BNC reduces molecular oxygen to 2 water molecules using 4 electrons from cytochrome c in the IMS and 4 protons from the mitochondrial matrix. This is Cytochrome c oxidase subunit 3 (COIII) from Artemia salina (Brine shrimp).